The chain runs to 471 residues: ATP synthase subunit beta (471 aa).

Position 153–160 (153–160 (GGAGVGKT)) interacts with ATP.

It belongs to the ATPase alpha/beta chains family. In terms of assembly, F-type ATPases have 2 components, CF(1) - the catalytic core - and CF(0) - the membrane proton channel. CF(1) has five subunits: alpha(3), beta(3), gamma(1), delta(1), epsilon(1). CF(0) has three main subunits: a(1), b(2) and c(9-12). The alpha and beta chains form an alternating ring which encloses part of the gamma chain. CF(1) is attached to CF(0) by a central stalk formed by the gamma and epsilon chains, while a peripheral stalk is formed by the delta and b chains.

Its subcellular location is the cell inner membrane. The enzyme catalyses ATP + H2O + 4 H(+)(in) = ADP + phosphate + 5 H(+)(out). Functionally, produces ATP from ADP in the presence of a proton gradient across the membrane. The catalytic sites are hosted primarily by the beta subunits. This is ATP synthase subunit beta from Verminephrobacter eiseniae (strain EF01-2).